The chain runs to 216 residues: Large ribosomal subunit protein uL24m (216 aa).

The N-terminal 9 residues, 1 to 9 (MRLSALLAL), are a transit peptide targeting the mitochondrion. Phosphoserine is present on Ser24. One can recognise a KOW domain in the interval 56-89 (LFCGDMVEILEGKDAGKQGKVVQVVRQRNWVVLE).

It belongs to the universal ribosomal protein uL24 family. As to quaternary structure, component of the mitochondrial ribosome large subunit (39S) which comprises a 16S rRNA and about 50 distinct proteins.

It is found in the mitochondrion. In Mus musculus (Mouse), this protein is Large ribosomal subunit protein uL24m (Mrpl24).